Reading from the N-terminus, the 424-residue chain is S-phase kinase-associated protein 2 (424 aa).

Residues 52–73 form a disordered region; it reads PHGLLSNLGHPQSPPRKRVKGK. Residue serine 64 is modified to Phosphoserine. A Nuclear localization signal motif is present at residues 67–73; the sequence is RKRVKGK. N6-acetyllysine; by p300/EP300 occurs at positions 68 and 71. Serine 75 is modified (phosphoserine). In terms of domain architecture, F-box spans 94 to 140; that stretch reads GVSWDSLPDELLLGIFSCLCLPELLRVSGVCKRWYRLSLDESLWQSL. 10 LRR repeats span residues 151–176, 177–204, 210–234, 235–257, 258–284, 286–308, 309–330, 334–356, 359–378, and 380–401; these read VTVR…PLGE, SFSS…ILSE, NLSL…NLVR, LNLC…SCSR, LDEL…LPNT, TQLN…IIKR, CPNL…CFPE, LNYL…LLEL, IPTL…TLQL, and REAL…RPTM. Serine 179 bears the Phosphoserine mark.

Part of a SCF(SKP2) complex consisting of CUL1, RBX1, SKP1 and SKP2. Component of a SCF(SKP2)-like complex containing CUL1, SKP1, TRIM21 and SKP2. Interacts directly with CUL1 and SKP1. Interacts with ASB2 which is the substrate-recognition component of a probable ECS E3 ubiquitin-protein ligase complex; ASB2 is likely to bridge the formation of dimeric E3-ubiquitin-protein ligase complexes composed of an ECS complex and an SCF(SKP2) complex. Interacts with CKS1. Interacts with the cyclin-A-CDK2 complex. Interacts with ORC1, phosphorylated CDT1, phosphorylated RBL2, ELF4, phosphorylated RAG2, FOXO1, UBP43, MYC, TOB1, TAL1 and KMT2A/MLL1. Interacts with TRIM21. Interacts with cyclin-E. Interacts with CARM1. Phosphorylated on serine and threonine resudues in response to DNA damage, promoting 'Lys-63'-linked ubiquitination of NBN. In terms of processing, ubiquitinated by the APC/C complex, leading to its degradation by the proteasome. Deubiquitinated by USP13. Post-translationally, acetylation at Lys-68 and Lys-71 increases stability through impairment of APC/C-mediated proteolysis and promotes cytoplasmic retention. Deacetylated by SIRT3.

It is found in the cytoplasm. Its subcellular location is the nucleus. It participates in protein modification; protein ubiquitination. In terms of biological role, substrate recognition component of a SCF (SKP1-CUL1-F-box protein) E3 ubiquitin-protein ligase complex which mediates the ubiquitination and subsequent proteasomal degradation of target proteins involved in cell cycle progression, signal transduction and transcription. Specifically recognizes phosphorylated CDKN1B/p27kip and is involved in regulation of G1/S transition. Degradation of CDKN1B/p27kip also requires CKS1. Recognizes target proteins ORC1, CDT1, RBL2, KMT2A/MLL1, CDK9, RAG2, NBN, FOXO1, UBP43, YTHDF2, and probably MYC, TOB1 and TAL1. Degradation of TAL1 also requires STUB1. Recognizes CDKN1A in association with CCNE1 or CCNE2 and CDK2. Promotes ubiquitination and destruction of CDH1 in a CK1-dependent manner, thereby regulating cell migration. Following phosphorylation in response to DNA damage, mediates 'Lys-63'-linked ubiquitination of NBN, promoting ATM recruitment to DNA damage sites and DNA repair via homologous recombination. Its function is as follows. Through the ubiquitin-mediated proteasomal degradation of viral proteins may have an antiviral activity. This Mus musculus (Mouse) protein is S-phase kinase-associated protein 2 (Skp2).